A 345-amino-acid chain; its full sequence is Selenide, water dikinase (345 aa).

Residue Cys15 is part of the active site. Residues Lys18 and 46–48 contribute to the ATP site; that span reads SKD. Asp49 is a binding site for Mg(2+). ATP is bound by residues Asp66, Asp89, and 137 to 139; that span reads GHS. Residue Asp89 participates in Mg(2+) binding. Position 225 (Asp225) interacts with Mg(2+).

It belongs to the selenophosphate synthase 1 family. Class I subfamily. In terms of assembly, homodimer. Requires Mg(2+) as cofactor.

It carries out the reaction hydrogenselenide + ATP + H2O = selenophosphate + AMP + phosphate + 2 H(+). Its function is as follows. Synthesizes selenophosphate from selenide and ATP. The protein is Selenide, water dikinase of Aeromonas salmonicida (strain A449).